We begin with the raw amino-acid sequence, 602 residues long: Elongation factor 4 (602 aa).

The region spanning 7-189 (KFIRNFSIIA…QLVVAIPPPV (183 aa)) is the tr-type G domain. GTP contacts are provided by residues 19–24 (DHGKST) and 136–139 (NKID).

This sequence belongs to the TRAFAC class translation factor GTPase superfamily. Classic translation factor GTPase family. LepA subfamily.

It localises to the cell inner membrane. It carries out the reaction GTP + H2O = GDP + phosphate + H(+). In terms of biological role, required for accurate and efficient protein synthesis under certain stress conditions. May act as a fidelity factor of the translation reaction, by catalyzing a one-codon backward translocation of tRNAs on improperly translocated ribosomes. Back-translocation proceeds from a post-translocation (POST) complex to a pre-translocation (PRE) complex, thus giving elongation factor G a second chance to translocate the tRNAs correctly. Binds to ribosomes in a GTP-dependent manner. The polypeptide is Elongation factor 4 (Coxiella burnetii (strain Dugway 5J108-111)).